The sequence spans 123 residues: MFAVIKTGGKQYRVAANDVITIEKLEGVAGDKIEFTEILMVGVGADATIGAPFVEGAVVSAEVVDQGRAKKVIAFKKRRRQNSKRSRGHRQHQTIVRILDIAAAGGKAKKASKKTEAAAEAAN.

The protein belongs to the bacterial ribosomal protein bL21 family. Part of the 50S ribosomal subunit. Contacts protein L20.

Functionally, this protein binds to 23S rRNA in the presence of protein L20. This is Large ribosomal subunit protein bL21 from Rhizobium meliloti (strain 1021) (Ensifer meliloti).